The primary structure comprises 286 residues: 4-hydroxybenzoate octaprenyltransferase (286 aa).

A run of 7 helical transmembrane segments spans residues 21-40 (GTLLLLWPCLMALMLAAGGM), 95-115 (ILFVILGLSAFGLVLLLNGLV), 142-162 (FLGIVWSWSIPMAYAAQTGEV), 167-187 (WWLFAANWCWTVAYDTMYAMV), 210-230 (QIIGLFQLAALACFIAAGWSA), 235-255 (LYGLGILTFVGFSTYQQMLIF), and 266-286 (FLNNNWAGLALFVGLGADYLI).

It belongs to the UbiA prenyltransferase family. Requires Mg(2+) as cofactor.

The protein localises to the cell inner membrane. The enzyme catalyses all-trans-octaprenyl diphosphate + 4-hydroxybenzoate = 4-hydroxy-3-(all-trans-octaprenyl)benzoate + diphosphate. The protein operates within cofactor biosynthesis; ubiquinone biosynthesis. Its function is as follows. Catalyzes the prenylation of para-hydroxybenzoate (PHB) with an all-trans polyprenyl group. Mediates the second step in the final reaction sequence of ubiquinone-8 (UQ-8) biosynthesis, which is the condensation of the polyisoprenoid side chain with PHB, generating the first membrane-bound Q intermediate 3-octaprenyl-4-hydroxybenzoate. This chain is 4-hydroxybenzoate octaprenyltransferase, found in Shewanella baltica (strain OS223).